The sequence spans 114 residues: Large ribosomal subunit protein uL22 (114 aa).

It belongs to the universal ribosomal protein uL22 family. Part of the 50S ribosomal subunit.

Its function is as follows. This protein binds specifically to 23S rRNA; its binding is stimulated by other ribosomal proteins, e.g. L4, L17, and L20. It is important during the early stages of 50S assembly. It makes multiple contacts with different domains of the 23S rRNA in the assembled 50S subunit and ribosome. The globular domain of the protein is located near the polypeptide exit tunnel on the outside of the subunit, while an extended beta-hairpin is found that lines the wall of the exit tunnel in the center of the 70S ribosome. The protein is Large ribosomal subunit protein uL22 of Streptococcus sanguinis (strain SK36).